The sequence spans 100 residues: uncharacterized protein (100 aa).

An N-terminal signal peptide occupies residues M1 to A23.

As to expression, nacreous layer of shell (at protein level). Expressed primarily in the mantle with highest level in the mantle pallium and lower level in the mantle edge.

The protein localises to the secreted. This is an uncharacterized protein from Margaritifera margaritifera (Freshwater pearl mussel).